An 843-amino-acid polypeptide reads, in one-letter code: Protein P (843 aa).

The terminal protein domain (TP) stretch occupies residues 1 to 177 (MPLSYQHFRK…FCGSPYSWEQ (177 aa)). Residues 178-346 (DLQHGRLVFQ…YCLCHIVNLI (169 aa)) form a spacer region. Disordered regions lie at residues 220-258 (KSRLGPQPPQGQLAGRPQGGSGSIRARVHPSPWGTVGVE) and 292-319 (SKGHSSSGRAVELHHFPPNSSRSQSQGS). The span at 308-319 (PPNSSRSQSQGS) shows a compositional bias: low complexity. A polymerase/reverse transcriptase domain (RT) region spans residues 347 to 690 (DDWGPCAEHG…YLNLYPVARQ (344 aa)). In terms of domain architecture, Reverse transcriptase spans 357-600 (EHRIRTPRTP…YSLNFMGYVI (244 aa)). The Mg(2+) site is built by D429, D551, and D552.

Belongs to the hepadnaviridae P protein family.

It catalyses the reaction DNA(n) + a 2'-deoxyribonucleoside 5'-triphosphate = DNA(n+1) + diphosphate. The enzyme catalyses Endonucleolytic cleavage to 5'-phosphomonoester.. Activated by host HSP70 and HSP40 in vitro to be able to bind the epsilon loop of the pgRNA. Because deletion of the RNase H region renders the protein partly chaperone-independent, the chaperones may be needed indirectly to relieve occlusion of the RNA-binding site by this domain. Inhibited by several reverse-transcriptase inhibitors: Lamivudine, Adefovir and Entecavir. Its function is as follows. Multifunctional enzyme that converts the viral RNA genome into dsDNA in viral cytoplasmic capsids. This enzyme displays a DNA polymerase activity that can copy either DNA or RNA templates, and a ribonuclease H (RNase H) activity that cleaves the RNA strand of RNA-DNA heteroduplexes in a partially processive 3'- to 5'-endonucleasic mode. Neo-synthesized pregenomic RNA (pgRNA) are encapsidated together with the P protein, and reverse-transcribed inside the nucleocapsid. Initiation of reverse-transcription occurs first by binding the epsilon loop on the pgRNA genome, and is initiated by protein priming, thereby the 5'-end of (-)DNA is covalently linked to P protein. Partial (+)DNA is synthesized from the (-)DNA template and generates the relaxed circular DNA (RC-DNA) genome. After budding and infection, the RC-DNA migrates in the nucleus, and is converted into a plasmid-like covalently closed circular DNA (cccDNA). The activity of P protein does not seem to be necessary for cccDNA generation, and is presumably released from (+)DNA by host nuclear DNA repair machinery. This is Protein P from Hepatitis B virus genotype B1 (isolate Japan/Yamagata-2/1998) (HBV-B).